The chain runs to 1021 residues: Sodium/potassium-transporting ATPase subunit alpha-1 (1021 aa).

Residues 1-5 constitute a propeptide that is removed on maturation; that stretch reads MGKGV. Residues 1–11 are compositionally biased toward basic and acidic residues; it reads MGKGVGRDKYE. The segment at 1-36 is disordered; the sequence is MGKGVGRDKYEPAAVSEHGDKKKAKKERDMDELKKE. Residues 6–85 are Cytoplasmic-facing; that stretch reads GRDKYEPAAV…NALTPPPTTP (80 aa). K9 is subject to N6-acetyllysine. Y10 is subject to Phosphotyrosine. S16 is subject to Phosphoserine; by PKC. Position 21 is an N6-acetyllysine (K21). Positions 26–36 are enriched in basic and acidic residues; sequence KERDMDELKKE. S38 and S45 each carry phosphoserine. Positions 80 to 82 are phosphoinositide-3 kinase binding; that stretch reads PPP. A helical membrane pass occupies residues 86-106; it reads EWVKFCRQLFGGFSMLLWIGA. The Extracellular segment spans residues 107-129; that stretch reads VLCFLAYGIQAATEEEPQNDNLY. Residues 130 to 150 form a helical membrane-spanning segment; the sequence is LGVVLSAVVIITGCFSYYQEA. Residues 151 to 286 lie on the Cytoplasmic side of the membrane; sequence KSSKIMESFK…GGQTPIAAEI (136 aa). A Phosphoserine modification is found at S226. Y258 is subject to Phosphotyrosine. A helical transmembrane segment spans residues 287 to 306; the sequence is EHFIHIITGVAVFLGVSFFI. At 307–318 the chain is on the extracellular side; sequence LSLILEYTWLEA. Residues 319 to 336 form a helical membrane-spanning segment; the sequence is VIFLIGIIVANVPEGLLA. Topologically, residues 337-770 are cytoplasmic; it reads TVTVCLTLTA…EEGRLIFDNL (434 aa). D374 (4-aspartylphosphate intermediate) is an active-site residue. 2 positions are modified to phosphoserine: S450 and S482. Residue K485 coordinates ATP. Y540 is subject to Phosphotyrosine. Residues 594-715 are mediates interaction with SCN7A; that stretch reads RAAVPDAVGK…QGAIVAVTGD (122 aa). S666 is subject to Phosphoserine. Mg(2+) is bound by residues D715 and D719. The chain crosses the membrane as a helical span at residues 771–790; it reads KKSIAYTLTSNIPEITPFLI. Residues 791 to 800 lie on the Extracellular side of the membrane; it reads FIIANIPLPL. Residues 801-821 traverse the membrane as a helical segment; sequence GTVTILCIDLGTDMVPAISLA. Residues 822-841 are Cytoplasmic-facing; sequence YEQAESDIMKRQPRNPQTDK. The chain crosses the membrane as a helical span at residues 842-864; that stretch reads LVNERLISMAYGQIGMIQALGGF. Residues 865-916 are Extracellular-facing; the sequence is FTYFVIMAENGFLPNHLLGIRVTWDDRWINDVEDSYGQQWTYEQRKIVEFTC. Residues 917 to 936 form a helical membrane-spanning segment; that stretch reads HTAFFVSIVVVQWADLVICK. Over 937 to 949 the chain is Cytoplasmic; that stretch reads TRRNSVFQQGMKN. A Phosphoserine; by PKA modification is found at S941. A helical transmembrane segment spans residues 950–968; it reads KILIFGLFEETALAAFLSY. Residues 969-983 lie on the Extracellular side of the membrane; the sequence is CPGMGVALRMYPLKP. A helical membrane pass occupies residues 984 to 1004; that stretch reads TWWFCAFPYSLLIFVYDEVRK. The Cytoplasmic segment spans residues 1005–1021; sequence LIIRRRPGGWVEKETYY.

The protein belongs to the cation transport ATPase (P-type) (TC 3.A.3) family. Type IIC subfamily. As to quaternary structure, the sodium/potassium-transporting ATPase is composed of a catalytic alpha subunit, an auxiliary non-catalytic beta subunit and an additional regulatory subunit. Interacts with regulatory subunit FXYD1. Interacts with regulatory subunit FXYD3. Interacts with SIK1. Interacts with SLC35G1 and STIM1. Interacts with CLN3; this interaction regulates the sodium/potassium-transporting ATPase complex localization at the plasma membrane. Interacts with SCN7A; activates ATP1A1 P-type sodium:potassium-exchanging transporter activity which indirectly signals to nearby neurons to regulate sodium homeostasis. Post-translationally, phosphorylation on Tyr-10 modulates pumping activity. Phosphorylation of Ser-941 by PKA modulates the response of ATP1A1 to PKC. Dephosphorylation by protein phosphatase 2A (PP2A) following increases in intracellular sodium, leading to increase catalytic activity.

The protein localises to the cell membrane. The protein resides in the basolateral cell membrane. It is found in the sarcolemma. It localises to the cell projection. Its subcellular location is the axon. The protein localises to the melanosome. The enzyme catalyses K(+)(out) + Na(+)(in) + ATP + H2O = K(+)(in) + Na(+)(out) + ADP + phosphate + H(+). With respect to regulation, specifically inhibited by cardiac glycosides such as digoxin or ouabain. In terms of biological role, this is the catalytic component of the active enzyme, which catalyzes the hydrolysis of ATP coupled with the exchange of sodium and potassium ions across the plasma membrane. This action creates the electrochemical gradient of sodium and potassium ions, providing the energy for active transport of various nutrients. Could also be part of an osmosensory signaling pathway that senses body-fluid sodium levels and controls salt intake behavior as well as voluntary water intake to regulate sodium homeostasis. This Ovis aries (Sheep) protein is Sodium/potassium-transporting ATPase subunit alpha-1 (ATP1A1).